Here is a 370-residue protein sequence, read N- to C-terminus: DNA replication and repair protein RecF (370 aa).

30 to 37 serves as a coordination point for ATP; sequence GENAQGKT.

The protein belongs to the RecF family.

Its subcellular location is the cytoplasm. Functionally, the RecF protein is involved in DNA metabolism; it is required for DNA replication and normal SOS inducibility. RecF binds preferentially to single-stranded, linear DNA. It also seems to bind ATP. The polypeptide is DNA replication and repair protein RecF (Listeria innocua serovar 6a (strain ATCC BAA-680 / CLIP 11262)).